The sequence spans 66 residues: DNA-directed RNA polymerase subunit Rpo10 (66 aa).

The Zn(2+) site is built by Cys-7, Cys-10, Cys-44, and Cys-45.

This sequence belongs to the archaeal Rpo10/eukaryotic RPB10 RNA polymerase subunit family. In terms of assembly, part of the RNA polymerase complex. Requires Zn(2+) as cofactor.

It localises to the cytoplasm. It catalyses the reaction RNA(n) + a ribonucleoside 5'-triphosphate = RNA(n+1) + diphosphate. Functionally, DNA-dependent RNA polymerase (RNAP) catalyzes the transcription of DNA into RNA using the four ribonucleoside triphosphates as substrates. The protein is DNA-directed RNA polymerase subunit Rpo10 of Pyrobaculum islandicum (strain DSM 4184 / JCM 9189 / GEO3).